The primary structure comprises 451 residues: Bifunctional protein GlmU (451 aa).

A pyrophosphorylase region spans residues Met1–Arg229. UDP-N-acetyl-alpha-D-glucosamine-binding positions include Leu8–Gly11, Lys22, Gln72, and Gly77–Thr78. Position 102 (Asp102) interacts with Mg(2+). The UDP-N-acetyl-alpha-D-glucosamine site is built by Gly139, Glu154, Asn169, and Asn227. Mg(2+) is bound at residue Asn227. Positions Val230 to Glu250 are linker. Residues Gly251 to Arg451 form an N-acetyltransferase region. UDP-N-acetyl-alpha-D-glucosamine-binding residues include Arg332 and Lys350. His362 functions as the Proton acceptor in the catalytic mechanism. UDP-N-acetyl-alpha-D-glucosamine is bound by residues Tyr365 and Asn376. Acetyl-CoA-binding positions include Asn385 to Tyr386, Ala422, and Arg439.

The protein in the N-terminal section; belongs to the N-acetylglucosamine-1-phosphate uridyltransferase family. It in the C-terminal section; belongs to the transferase hexapeptide repeat family. As to quaternary structure, homotrimer. Requires Mg(2+) as cofactor.

It is found in the cytoplasm. The catalysed reaction is alpha-D-glucosamine 1-phosphate + acetyl-CoA = N-acetyl-alpha-D-glucosamine 1-phosphate + CoA + H(+). The enzyme catalyses N-acetyl-alpha-D-glucosamine 1-phosphate + UTP + H(+) = UDP-N-acetyl-alpha-D-glucosamine + diphosphate. Its pathway is nucleotide-sugar biosynthesis; UDP-N-acetyl-alpha-D-glucosamine biosynthesis; N-acetyl-alpha-D-glucosamine 1-phosphate from alpha-D-glucosamine 6-phosphate (route II): step 2/2. The protein operates within nucleotide-sugar biosynthesis; UDP-N-acetyl-alpha-D-glucosamine biosynthesis; UDP-N-acetyl-alpha-D-glucosamine from N-acetyl-alpha-D-glucosamine 1-phosphate: step 1/1. It functions in the pathway bacterial outer membrane biogenesis; LPS lipid A biosynthesis. Catalyzes the last two sequential reactions in the de novo biosynthetic pathway for UDP-N-acetylglucosamine (UDP-GlcNAc). The C-terminal domain catalyzes the transfer of acetyl group from acetyl coenzyme A to glucosamine-1-phosphate (GlcN-1-P) to produce N-acetylglucosamine-1-phosphate (GlcNAc-1-P), which is converted into UDP-GlcNAc by the transfer of uridine 5-monophosphate (from uridine 5-triphosphate), a reaction catalyzed by the N-terminal domain. This is Bifunctional protein GlmU from Exiguobacterium sp. (strain ATCC BAA-1283 / AT1b).